The chain runs to 443 residues: ATP-dependent protease ATPase subunit HslU (443 aa).

ATP is bound by residues Ile-19, 61-66, Asp-256, Glu-321, and Arg-393; that span reads GVGKTE.

It belongs to the ClpX chaperone family. HslU subfamily. In terms of assembly, a double ring-shaped homohexamer of HslV is capped on each side by a ring-shaped HslU homohexamer. The assembly of the HslU/HslV complex is dependent on binding of ATP.

Its subcellular location is the cytoplasm. Functionally, ATPase subunit of a proteasome-like degradation complex; this subunit has chaperone activity. The binding of ATP and its subsequent hydrolysis by HslU are essential for unfolding of protein substrates subsequently hydrolyzed by HslV. HslU recognizes the N-terminal part of its protein substrates and unfolds these before they are guided to HslV for hydrolysis. The chain is ATP-dependent protease ATPase subunit HslU from Ralstonia pickettii (strain 12J).